A 757-amino-acid chain; its full sequence is RNA-directed RNA polymerase catalytic subunit (757 aa).

Positions 50 to 82 (SERGRWTKNTETGAPQLNPIDGPLPEDNEPSGY) are disordered. Short sequence motifs (nuclear localization signal) lie at residues 187-195 (RKRRVRDNV) and 203-216 (RTIG…DKRS). The tract at residues 249 to 256 (RGFVYFVE) is promoter-binding site. The 198-residue stretch at 286 to 483 (VRKMMTNSQD…GINMSKKKSY (198 aa)) folds into the RdRp catalytic domain.

This sequence belongs to the influenza viruses polymerase PB1 family. Influenza RNA polymerase is composed of three subunits: PB1, PB2 and PA. Interacts (via N-terminus) with PA (via C-terminus). Interacts (via C-terminus) with PB2 (via N-terminus); this interaction is essential for transcription initiation. Interacts (via C-terminus) with human PKP2 (via N-terminus); the interaction competitively inhibits the interaction between the RNA polymerase subunits PB1 and PB2. Post-translationally, phosphorylated by host PRKCA.

The protein resides in the host nucleus. Its subcellular location is the host cytoplasm. It catalyses the reaction RNA(n) + a ribonucleoside 5'-triphosphate = RNA(n+1) + diphosphate. Its function is as follows. RNA-dependent RNA polymerase which is responsible for replication and transcription of virus RNA segments. The transcription of viral mRNAs occurs by a unique mechanism called cap-snatching. 5' methylated caps of cellular mRNAs are cleaved after 10-13 nucleotides by PA. In turn, these short capped RNAs are used as primers by PB1 for transcription of viral mRNAs. During virus replication, PB1 initiates RNA synthesis and copy vRNA into complementary RNA (cRNA) which in turn serves as a template for the production of more vRNAs. The protein is RNA-directed RNA polymerase catalytic subunit of Aves (Human).